Here is an 806-residue protein sequence, read N- to C-terminus: Leucine--tRNA ligase (806 aa).

The short motif at 40–51 (PYPSGKGLHVGH) is the 'HIGH' region element. The short motif at 580-584 (KMSKS) is the 'KMSKS' region element. Lys-583 provides a ligand contact to ATP.

The protein belongs to the class-I aminoacyl-tRNA synthetase family.

It localises to the cytoplasm. It catalyses the reaction tRNA(Leu) + L-leucine + ATP = L-leucyl-tRNA(Leu) + AMP + diphosphate. The protein is Leucine--tRNA ligase of Ureaplasma urealyticum serovar 10 (strain ATCC 33699 / Western).